The primary structure comprises 754 residues: Polyribonucleotide nucleotidyltransferase (754 aa).

Mg(2+) is bound by residues Asp-525 and Asp-531. Residues 591-650 (PRITTIKVPVDKIGEVIGPKGKMINSITEETGASISIEDDGTVFVGASNGEAAQAAIDKI) enclose the KH domain. An S1 motif domain is found at 662 to 731 (GERFLGTVVK…NRGKISLVLV (70 aa)).

The protein belongs to the polyribonucleotide nucleotidyltransferase family. The cofactor is Mg(2+).

It is found in the cytoplasm. The catalysed reaction is RNA(n+1) + phosphate = RNA(n) + a ribonucleoside 5'-diphosphate. Its function is as follows. Involved in mRNA degradation. Catalyzes the phosphorolysis of single-stranded polyribonucleotides processively in the 3'- to 5'-direction. The chain is Polyribonucleotide nucleotidyltransferase from Mycolicibacterium vanbaalenii (strain DSM 7251 / JCM 13017 / BCRC 16820 / KCTC 9966 / NRRL B-24157 / PYR-1) (Mycobacterium vanbaalenii).